The sequence spans 104 residues: Nucleoid-associated protein Moth_0028 (104 aa).

It belongs to the YbaB/EbfC family. As to quaternary structure, homodimer.

The protein localises to the cytoplasm. It is found in the nucleoid. Functionally, binds to DNA and alters its conformation. May be involved in regulation of gene expression, nucleoid organization and DNA protection. In Moorella thermoacetica (strain ATCC 39073 / JCM 9320), this protein is Nucleoid-associated protein Moth_0028.